We begin with the raw amino-acid sequence, 1026 residues long: MKFFALFIHRPVATLLLTLAIALCGVLGFRLLPVSPLPQVDFPVISVSASLPGASPETMASAVATPLERALGRIAGVSEMTSTSSLGSTRVILVFNLDRDINGAARDVQAAINAAQNLLPSGMSSRPTYRKVNPSDAPVMILTLTSDTYSQGQLYDFASTQLSQKISQMEGVGDVSIGGSSLPAVRVALNPVALFNQGISLDEVRQAIAQANVRQPLGNVENSQKSWQIKTNDELKTADAYAPLIIHYNNGAAVRLSDVATVEDSVQNSRNAGMANAKPAILVMIRRAPDANIITTVDNIRAAMPELRASLPAEIQLDVAQDRSPTIRASLAEVEQSLVIAVALVILVVFLFLRSGRATAIPALAVPVSLIGTFAAMYLCGFSLNNLSLMALTIATGFVVDDAIVVLENISRHIEAGMKPLQASLQGVREVGFTVLSMSLSLVAVFIPLLLMEGLPGRLFREFAVTLSVAIMISLLISLTLTPMLCARLLRAVPKRSQPRKQGFNRVLLAMQQGYGRSLKWVLNHARWVLLLLLGTIALNVWLYISIPKTFFPEQDTGRLMGFIQADQSISFQAMTVKLQNFMTIVSSDPAVDNVNGFTGGSRTNSGSMFISLKPLSERDVSAQQVISRLRIKLAKEPGANLFLMPVQDIRIGGREANAGYQYTLLSDDLSELRTWEPKIRAAFSKLPELADVNSDQQDKGAEMALTYDRDAMAQLGISVSAVNALLNNAFGQRQISTIYQPLNQYKVVMEVDDAYTQDVSSLNKMFVINSEGKPIPLSYFASWKPINAPLSVNHQGLSAASTISFNLPEGTDLSSATAAIERTMTSLGVPSAVRGQFSGTAQAFQQSQSSQLLLILAAIITVYIVLGVLYESYVHPLTILSTLPSAGVGALLALEWFGAPFSLVALIGIMLLIGIVKKNAIMMVDFALVAQRSGKLSAQDAIFQACLLRFRPIMMTTLAALFGALPLVLTSGDGAELRQPLGITIVGGLVMSQILTLYTTPVVYLFFDKLRNIRRKAPERDVSLS.

12 helical membrane passes run 12 to 32 (VATLLLTLAIALCGVLGFRLL), 333 to 353 (EVEQSLVIAVALVILVVFLFL), 360 to 380 (AIPALAVPVSLIGTFAAMYLC), 387 to 407 (LSLMALTIATGFVVDDAIVVL), 431 to 451 (VGFTVLSMSLSLVAVFIPLLL), 463 to 483 (FAVTLSVAIMISLLISLTLTP), 528 to 548 (WVLLLLLGTIALNVWLYISIP), 853 to 873 (LLLILAAIITVYIVLGVLYES), 875 to 895 (VHPLTILSTLPSAGVGALLAL), 897 to 917 (WFGAPFSLVALIGIMLLIGIV), 953 to 973 (PIMMTTLAALFGALPLVLTSG), and 984 to 1004 (ITIVGGLVMSQILTLYTTPVV).

The protein belongs to the resistance-nodulation-cell division (RND) (TC 2.A.6) family. MdtC subfamily. Part of a tripartite efflux system composed of MdtA, MdtB and MdtC. MdtC forms a heteromultimer with MdtB.

It localises to the cell inner membrane. This chain is Multidrug resistance protein MdtC, found in Pectobacterium carotovorum subsp. carotovorum (strain PC1).